The chain runs to 556 residues: 2-succinyl-5-enolpyruvyl-6-hydroxy-3-cyclohexene-1-carboxylate synthase (556 aa).

Belongs to the TPP enzyme family. MenD subfamily. In terms of assembly, homodimer. Mg(2+) is required as a cofactor. It depends on Mn(2+) as a cofactor. Thiamine diphosphate serves as cofactor.

The enzyme catalyses isochorismate + 2-oxoglutarate + H(+) = 5-enolpyruvoyl-6-hydroxy-2-succinyl-cyclohex-3-ene-1-carboxylate + CO2. The protein operates within quinol/quinone metabolism; 1,4-dihydroxy-2-naphthoate biosynthesis; 1,4-dihydroxy-2-naphthoate from chorismate: step 2/7. It participates in quinol/quinone metabolism; menaquinone biosynthesis. In terms of biological role, catalyzes the thiamine diphosphate-dependent decarboxylation of 2-oxoglutarate and the subsequent addition of the resulting succinic semialdehyde-thiamine pyrophosphate anion to isochorismate to yield 2-succinyl-5-enolpyruvyl-6-hydroxy-3-cyclohexene-1-carboxylate (SEPHCHC). This chain is 2-succinyl-5-enolpyruvyl-6-hydroxy-3-cyclohexene-1-carboxylate synthase, found in Salmonella paratyphi C (strain RKS4594).